The primary structure comprises 214 residues: Epoxide hydrolase EphH (214 aa).

The Nucleophile role is filled by Ser28. Active-site charge relay system residues include Asp156 and His186.

It belongs to the AB hydrolase superfamily.

It catalyses the reaction an epoxide + H2O = an ethanediol. Inhibited by AUDA, a known epoxide hydrolase inhibitor. In terms of biological role, catalyzes the hydrolysis of epoxide-containing substrates. In vitro, catalyzes the hydrolysis of the synthetic compounds PHOME and styrene oxide. Plays an essential role in subverting phagosomal acidification. Plays a major role in the survival of M.tuberculosis (Mtb) during in vitro acidic stress and protects Mtb in response to phagosomal acidification inside macrophages. Also supports Mtb growth under the nutrient-deprived condition at pH 7.0. This Mycobacterium tuberculosis (strain ATCC 25618 / H37Rv) protein is Epoxide hydrolase EphH.